A 199-amino-acid chain; its full sequence is Transgelin-3 (199 aa).

A Calponin-homology (CH) domain is found at 24 to 136 (ADLENKLVDW…RTLMALGSVA (113 aa)). Ser-163 carries the phosphoserine modification. Residues 174–199 (IGLQMGSNKGASQAGMTGYGMPRQIM) form a Calponin-like repeat. Positions 176-188 (LQMGSNKGASQAG) are enriched in polar residues. Positions 176 to 199 (LQMGSNKGASQAGMTGYGMPRQIM) are disordered.

It belongs to the calponin family.

This is Transgelin-3 (TAGLN3) from Pongo abelii (Sumatran orangutan).